Here is a 624-residue protein sequence, read N- to C-terminus: Penicillin-binding protein 4 (624 aa).

Positions 1–21 are cleaved as a signal peptide; it reads MTMLRKIIGWILLLCIIPLFA. Catalysis depends on Glu96, which acts as the Proton donor; for transglycosylase activity. Ser388 (acyl-ester intermediate; for transpeptidase activity) is an active-site residue.

This sequence in the N-terminal section; belongs to the glycosyltransferase 51 family. It in the C-terminal section; belongs to the transpeptidase family. The N-terminus is blocked.

Its subcellular location is the cell membrane. It catalyses the reaction [GlcNAc-(1-&gt;4)-Mur2Ac(oyl-L-Ala-gamma-D-Glu-L-Lys-D-Ala-D-Ala)](n)-di-trans,octa-cis-undecaprenyl diphosphate + beta-D-GlcNAc-(1-&gt;4)-Mur2Ac(oyl-L-Ala-gamma-D-Glu-L-Lys-D-Ala-D-Ala)-di-trans,octa-cis-undecaprenyl diphosphate = [GlcNAc-(1-&gt;4)-Mur2Ac(oyl-L-Ala-gamma-D-Glu-L-Lys-D-Ala-D-Ala)](n+1)-di-trans,octa-cis-undecaprenyl diphosphate + di-trans,octa-cis-undecaprenyl diphosphate + H(+). The enzyme catalyses Preferential cleavage: (Ac)2-L-Lys-D-Ala-|-D-Ala. Also transpeptidation of peptidyl-alanyl moieties that are N-acyl substituents of D-alanine.. Functionally, cell wall formation. Synthesis of cross-linked peptidoglycan from the lipid intermediates. The enzyme has a penicillin-insensitive transglycosylase N-terminal domain (formation of linear glycan strands) and a penicillin-sensitive transpeptidase C-terminal domain (cross-linking of the peptide subunits). Has a partially redundant function with PBP-2A (pbpA) during spore outgrowth. This Bacillus subtilis (strain 168) protein is Penicillin-binding protein 4.